Consider the following 386-residue polypeptide: Succinate--CoA ligase [ADP-forming] subunit beta (386 aa).

Residues K46, 53–55 (GRG), E99, Q102, and E107 each bind ATP. 2 residues coordinate Mg(2+): N199 and D213. Residues N264 and 321-323 (GIV) each bind substrate.

Belongs to the succinate/malate CoA ligase beta subunit family. As to quaternary structure, heterotetramer of two alpha and two beta subunits. Requires Mg(2+) as cofactor.

It carries out the reaction succinate + ATP + CoA = succinyl-CoA + ADP + phosphate. The catalysed reaction is GTP + succinate + CoA = succinyl-CoA + GDP + phosphate. Its pathway is carbohydrate metabolism; tricarboxylic acid cycle; succinate from succinyl-CoA (ligase route): step 1/1. Succinyl-CoA synthetase functions in the citric acid cycle (TCA), coupling the hydrolysis of succinyl-CoA to the synthesis of either ATP or GTP and thus represents the only step of substrate-level phosphorylation in the TCA. The beta subunit provides nucleotide specificity of the enzyme and binds the substrate succinate, while the binding sites for coenzyme A and phosphate are found in the alpha subunit. This Ruthia magnifica subsp. Calyptogena magnifica protein is Succinate--CoA ligase [ADP-forming] subunit beta.